The chain runs to 746 residues: NAD(P)H-quinone oxidoreductase subunit 5, chloroplastic (746 aa).

A run of 16 helical transmembrane segments spans residues 9 to 29, 40 to 60, 89 to 109, 125 to 145, 147 to 167, 185 to 205, 221 to 241, 258 to 278, 280 to 300, 327 to 347, 354 to 374, 396 to 416, 425 to 445, 547 to 567, 608 to 628, and 723 to 743; these read WIIP…LLLF, WTFL…YLSI, IDPL…LVLI, FAYM…SNLI, VYFF…FWFT, GDFG…SFEF, VNLL…IAKS, TPIS…FLVA, LLPL…IGII, LGYM…FHLI, ALLF…VGYS, IAFL…CFWS, LLFS…TAFY, ILFP…IGIP, FSVS…KPFY, and YLFL…FFYF.

This sequence belongs to the complex I subunit 5 family. As to quaternary structure, NDH is composed of at least 16 different subunits, 5 of which are encoded in the nucleus.

The protein resides in the plastid. The protein localises to the chloroplast thylakoid membrane. It catalyses the reaction a plastoquinone + NADH + (n+1) H(+)(in) = a plastoquinol + NAD(+) + n H(+)(out). The catalysed reaction is a plastoquinone + NADPH + (n+1) H(+)(in) = a plastoquinol + NADP(+) + n H(+)(out). In terms of biological role, NDH shuttles electrons from NAD(P)H:plastoquinone, via FMN and iron-sulfur (Fe-S) centers, to quinones in the photosynthetic chain and possibly in a chloroplast respiratory chain. The immediate electron acceptor for the enzyme in this species is believed to be plastoquinone. Couples the redox reaction to proton translocation, and thus conserves the redox energy in a proton gradient. This Nasturtium officinale (Watercress) protein is NAD(P)H-quinone oxidoreductase subunit 5, chloroplastic (ndhF).